Here is a 128-residue protein sequence, read N- to C-terminus: MEKLILAIIVGCGGFIGAALRYLISENTSKMFNGNFPYGTLIVNIVGAIIIGFIMDINANTSLISGHTKLFLTTGMMGGLTTFSTFSYETINLINCGNILMGCTNAALNLGLSLVGVIIGQALGKIVY.

4 helical membrane-spanning segments follow: residues 4 to 24, 37 to 57, 63 to 83, and 99 to 119; these read LILA…RYLI, PYGT…IMDI, LISG…LTTF, and ILMG…GVII. Residues Gly-78 and Thr-81 each coordinate Na(+).

It belongs to the fluoride channel Fluc/FEX (TC 1.A.43) family.

It localises to the cell membrane. The enzyme catalyses fluoride(in) = fluoride(out). Na(+) is not transported, but it plays an essential structural role and its presence is essential for fluoride channel function. In terms of biological role, fluoride-specific ion channel. Important for reducing fluoride concentration in the cell, thus reducing its toxicity. This is Fluoride-specific ion channel FluC from Clostridium novyi (strain NT).